The sequence spans 435 residues: tRNA-2-methylthio-N(6)-dimethylallyladenosine synthase (435 aa).

The 117-residue stretch at 1–117 (MKYFIKTYGC…MPKLLEDVKV (117 aa)) folds into the MTTase N-terminal domain. The [4Fe-4S] cluster site is built by C10, C46, C80, C156, C160, and C163. Positions 142 to 370 (RDNSYCAYVT…LEIQKAITSK (229 aa)) constitute a Radical SAM core domain. Residues 373 to 433 (QRYKNTVQKV…FQSLDGVVQN (61 aa)) form the TRAM domain.

It belongs to the methylthiotransferase family. MiaB subfamily. Monomer. The cofactor is [4Fe-4S] cluster.

Its subcellular location is the cytoplasm. It carries out the reaction N(6)-dimethylallyladenosine(37) in tRNA + (sulfur carrier)-SH + AH2 + 2 S-adenosyl-L-methionine = 2-methylsulfanyl-N(6)-dimethylallyladenosine(37) in tRNA + (sulfur carrier)-H + 5'-deoxyadenosine + L-methionine + A + S-adenosyl-L-homocysteine + 2 H(+). Functionally, catalyzes the methylthiolation of N6-(dimethylallyl)adenosine (i(6)A), leading to the formation of 2-methylthio-N6-(dimethylallyl)adenosine (ms(2)i(6)A) at position 37 in tRNAs that read codons beginning with uridine. This Hydrogenobaculum sp. (strain Y04AAS1) protein is tRNA-2-methylthio-N(6)-dimethylallyladenosine synthase.